Here is a 237-residue protein sequence, read N- to C-terminus: UPF0173 metal-dependent hydrolase BruAb2_0628 (237 aa).

This sequence belongs to the UPF0173 family.

The sequence is that of UPF0173 metal-dependent hydrolase BruAb2_0628 from Brucella abortus biovar 1 (strain 9-941).